Reading from the N-terminus, the 58-residue chain is uncharacterized protein (58 aa).

A helical transmembrane segment spans residues 24–44 (LSVYLGLATTIVCIVLFFTML).

It localises to the membrane. This is an uncharacterized protein from Haemophilus influenzae (strain ATCC 51907 / DSM 11121 / KW20 / Rd).